Consider the following 474-residue polypeptide: Probable periplasmic serine endoprotease DegP-like (474 aa).

The signal sequence occupies residues 1 to 25 (MRNLKSVTPLLMAALLWGQSLLAQA). Residues His-113, Asp-143, and Ser-216 each act as charge relay system in the active site. Residues 214 to 216 (GNS) and 271 to 275 (LGVVI) contribute to the substrate site. PDZ domains follow at residues 260-351 (LKAD…VRDG) and 357-463 (KVTI…LRQG).

The protein belongs to the peptidase S1C family.

The protein resides in the periplasm. The enzyme catalyses Acts on substrates that are at least partially unfolded. The cleavage site P1 residue is normally between a pair of hydrophobic residues, such as Val-|-Val.. Its function is as follows. Might be efficient in the degradation of transiently denatured and unfolded proteins which accumulate in the periplasm following stress conditions. This is Probable periplasmic serine endoprotease DegP-like from Ectopseudomonas mendocina (strain ymp) (Pseudomonas mendocina).